We begin with the raw amino-acid sequence, 196 residues long: MTKKNKNQTLALDLDNCEKLTQLKEIPKSRSSSITSIESEGSIQSVLKPPPMREFEDVVAFESYIRDETWDNDFDYCHAHLSYYPPFITKEVHGNMDKIKPTMNKKSRKFKRNLQHHIQKHLMPEMEKCSGFTMDFGKAGVEETPTMLKWKFEDTSDHGFSKEEENQFDRHWKLQLEVTCNNENPLVEVDYMAIPI.

The tract at residues 28–48 (KSRSSSITSIESEGSIQSVLK) is disordered. Residues 29–45 (SRSSSITSIESEGSIQS) are compositionally biased toward low complexity.

Belongs to the RGI1 family.

Its subcellular location is the cell membrane. Involved in the control of energetic metabolism and significantly contribute to cell fitness, especially under respiratory growth conditions. This chain is Respiratory growth induced protein 1 (RGI1), found in Debaryomyces hansenii (strain ATCC 36239 / CBS 767 / BCRC 21394 / JCM 1990 / NBRC 0083 / IGC 2968) (Yeast).